The sequence spans 502 residues: Histidine--tRNA ligase (502 aa).

The protein belongs to the class-II aminoacyl-tRNA synthetase family. In terms of assembly, homodimer.

It localises to the cytoplasm. The catalysed reaction is tRNA(His) + L-histidine + ATP = L-histidyl-tRNA(His) + AMP + diphosphate + H(+). This Brucella ovis (strain ATCC 25840 / 63/290 / NCTC 10512) protein is Histidine--tRNA ligase.